We begin with the raw amino-acid sequence, 313 residues long: uncharacterized protein (313 aa).

A divalent metal cation is bound by residues His-8, His-10, Glu-126, His-180, His-207, and Asp-262.

Belongs to the metallo-dependent hydrolases superfamily. TatD-type hydrolase family. It depends on a divalent metal cation as a cofactor.

Putative deoxyribonuclease. This is an uncharacterized protein from Saccharomyces cerevisiae (strain ATCC 204508 / S288c) (Baker's yeast).